The sequence spans 259 residues: Exotoxin A regulatory protein (259 aa).

It is found in the cell inner membrane. In terms of biological role, positive regulation of toxA gene transcription. The chain is Exotoxin A regulatory protein (toxR) from Pseudomonas aeruginosa (strain ATCC 15692 / DSM 22644 / CIP 104116 / JCM 14847 / LMG 12228 / 1C / PRS 101 / PAO1).